A 67-amino-acid chain; its full sequence is Large ribosomal subunit protein bL35 (67 aa).

Belongs to the bacterial ribosomal protein bL35 family.

This Rhizorhabdus wittichii (strain DSM 6014 / CCUG 31198 / JCM 15750 / NBRC 105917 / EY 4224 / RW1) (Sphingomonas wittichii) protein is Large ribosomal subunit protein bL35.